The chain runs to 481 residues: uncharacterized protein (481 aa).

10 helical membrane passes run 32–52, 82–102, 137–157, 173–193, 204–224, 258–278, 289–309, 348–368, 392–412, and 418–438; these read LSWL…YWGV, FFHW…IMAY, MFLI…AATF, VQAF…WIGI, VGWG…TEFI, WTVF…MFVT, VIWG…GVME, LFLA…MDAV, LFWC…GASL, and TVVL…GGFI.

This sequence belongs to the BCCT transporter (TC 2.A.15) family.

It localises to the cell inner membrane. Probable transporter whose substrate is unknown. Is not involved in aerobic D-malate transport. This is an uncharacterized protein from Escherichia coli (strain K12).